Reading from the N-terminus, the 245-residue chain is Pyridoxine 5'-phosphate synthase (245 aa).

Asn7 serves as a coordination point for 3-amino-2-oxopropyl phosphate. 9 to 10 (DH) contacts 1-deoxy-D-xylulose 5-phosphate. Arg18 provides a ligand contact to 3-amino-2-oxopropyl phosphate. The active-site Proton acceptor is His43. 2 residues coordinate 1-deoxy-D-xylulose 5-phosphate: Arg45 and His50. Glu70 serves as the catalytic Proton acceptor. Thr100 is a 1-deoxy-D-xylulose 5-phosphate binding site. His190 (proton donor) is an active-site residue. 3-amino-2-oxopropyl phosphate is bound by residues Gly191 and 212–213 (GH).

The protein belongs to the PNP synthase family. As to quaternary structure, homooctamer; tetramer of dimers.

It localises to the cytoplasm. The catalysed reaction is 3-amino-2-oxopropyl phosphate + 1-deoxy-D-xylulose 5-phosphate = pyridoxine 5'-phosphate + phosphate + 2 H2O + H(+). It participates in cofactor biosynthesis; pyridoxine 5'-phosphate biosynthesis; pyridoxine 5'-phosphate from D-erythrose 4-phosphate: step 5/5. Catalyzes the complicated ring closure reaction between the two acyclic compounds 1-deoxy-D-xylulose-5-phosphate (DXP) and 3-amino-2-oxopropyl phosphate (1-amino-acetone-3-phosphate or AAP) to form pyridoxine 5'-phosphate (PNP) and inorganic phosphate. The sequence is that of Pyridoxine 5'-phosphate synthase from Prochlorococcus marinus (strain MIT 9313).